The following is an 85-amino-acid chain: Large ribosomal subunit protein bL27 (85 aa).

Residues 1–20 (MAHKKAGGSTRNGRDSEAKR) form a disordered region.

It belongs to the bacterial ribosomal protein bL27 family.

The protein is Large ribosomal subunit protein bL27 of Enterobacter sp. (strain 638).